Reading from the N-terminus, the 535-residue chain is ATP-dependent RNA helicase DBP3 (535 aa).

The span at Met1–Lys21 shows a compositional bias: basic and acidic residues. Residues Met1–Ser82 form a disordered region. The segment covering Ser22–Lys33 has biased composition (basic residues). Basic and acidic residues predominate over residues Asp34 to Thr72. The Q motif motif lies at Leu125–Ala151. A Helicase ATP-binding domain is found at Trp154–Val327. Ala167–Thr174 provides a ligand contact to ATP. The DEAD box motif lies at Asp274 to Asp277. Positions Lys352 to Gly505 constitute a Helicase C-terminal domain.

It belongs to the DEAD box helicase family. DDX5/DBP2 subfamily.

The protein localises to the nucleus. The protein resides in the nucleolus. The enzyme catalyses ATP + H2O = ADP + phosphate + H(+). Functionally, ATP-dependent RNA helicase required for 60S ribosomal subunit synthesis. Involved in efficient pre-rRNA processing, predominantly at site A3, which is necessary for the normal formation of 25S and 5.8S rRNAs. The chain is ATP-dependent RNA helicase DBP3 (DBP3) from Eremothecium gossypii (strain ATCC 10895 / CBS 109.51 / FGSC 9923 / NRRL Y-1056) (Yeast).